Reading from the N-terminus, the 115-residue chain is Phosphoribosyl-AMP cyclohydrolase (115 aa).

Asp-80 contacts Mg(2+). Cys-81 is a Zn(2+) binding site. Asp-82 and Asp-84 together coordinate Mg(2+). Cys-97 and Cys-104 together coordinate Zn(2+).

It belongs to the PRA-CH family. Homodimer. Mg(2+) serves as cofactor. It depends on Zn(2+) as a cofactor.

Its subcellular location is the cytoplasm. The catalysed reaction is 1-(5-phospho-beta-D-ribosyl)-5'-AMP + H2O = 1-(5-phospho-beta-D-ribosyl)-5-[(5-phospho-beta-D-ribosylamino)methylideneamino]imidazole-4-carboxamide. It participates in amino-acid biosynthesis; L-histidine biosynthesis; L-histidine from 5-phospho-alpha-D-ribose 1-diphosphate: step 3/9. Its function is as follows. Catalyzes the hydrolysis of the adenine ring of phosphoribosyl-AMP. The protein is Phosphoribosyl-AMP cyclohydrolase of Nocardia farcinica (strain IFM 10152).